Here is a 354-residue protein sequence, read N- to C-terminus: Chorismate synthase (354 aa).

R48 is a binding site for NADP(+). Residues 125-127 (RAS), G277, 292-296 (KPIPS), and R318 contribute to the FMN site.

The protein belongs to the chorismate synthase family. In terms of assembly, homotetramer. The cofactor is FMNH2.

The enzyme catalyses 5-O-(1-carboxyvinyl)-3-phosphoshikimate = chorismate + phosphate. It functions in the pathway metabolic intermediate biosynthesis; chorismate biosynthesis; chorismate from D-erythrose 4-phosphate and phosphoenolpyruvate: step 7/7. Its function is as follows. Catalyzes the anti-1,4-elimination of the C-3 phosphate and the C-6 proR hydrogen from 5-enolpyruvylshikimate-3-phosphate (EPSP) to yield chorismate, which is the branch point compound that serves as the starting substrate for the three terminal pathways of aromatic amino acid biosynthesis. This reaction introduces a second double bond into the aromatic ring system. This chain is Chorismate synthase, found in Nitratidesulfovibrio vulgaris (strain ATCC 29579 / DSM 644 / CCUG 34227 / NCIMB 8303 / VKM B-1760 / Hildenborough) (Desulfovibrio vulgaris).